The chain runs to 552 residues: Urocanate hydratase (552 aa).

Residues 49–50, Gln-127, 173–175, Glu-193, Arg-198, 239–240, 260–264, 270–271, and Tyr-319 contribute to the NAD(+) site; these read GG, GMG, NA, QTSAH, and YV. Residue Cys-407 is part of the active site. Gly-489 provides a ligand contact to NAD(+).

The protein belongs to the urocanase family. Composed of at least two subunits. The cofactor is NAD(+).

The protein resides in the cytoplasm. It carries out the reaction 4-imidazolone-5-propanoate = trans-urocanate + H2O. The protein operates within amino-acid degradation; L-histidine degradation into L-glutamate; N-formimidoyl-L-glutamate from L-histidine: step 2/3. Its function is as follows. Catalyzes the conversion of urocanate to 4-imidazolone-5-propionate. The sequence is that of Urocanate hydratase from Bacillus subtilis (strain 168).